The chain runs to 194 residues: ATP-dependent Clp protease proteolytic subunit (194 aa).

Catalysis depends on Ser-98, which acts as the Nucleophile. The active site involves His-123.

It belongs to the peptidase S14 family. As to quaternary structure, fourteen ClpP subunits assemble into 2 heptameric rings which stack back to back to give a disk-like structure with a central cavity, resembling the structure of eukaryotic proteasomes.

The protein localises to the cytoplasm. The catalysed reaction is Hydrolysis of proteins to small peptides in the presence of ATP and magnesium. alpha-casein is the usual test substrate. In the absence of ATP, only oligopeptides shorter than five residues are hydrolyzed (such as succinyl-Leu-Tyr-|-NHMec, and Leu-Tyr-Leu-|-Tyr-Trp, in which cleavage of the -Tyr-|-Leu- and -Tyr-|-Trp bonds also occurs).. Its function is as follows. Cleaves peptides in various proteins in a process that requires ATP hydrolysis. Has a chymotrypsin-like activity. Plays a major role in the degradation of misfolded proteins. This Syntrophotalea carbinolica (strain DSM 2380 / NBRC 103641 / GraBd1) (Pelobacter carbinolicus) protein is ATP-dependent Clp protease proteolytic subunit.